A 182-amino-acid polypeptide reads, in one-letter code: MEQFHGTTILSVRRGNQVVIGGDGQVTLGNTVMKGNARKVRRLYKDKVIAGFAGGTADAFTLFERFEAKLEMHQGHLIRAAVELAKDWRTDRILRRLEAVLAVADSKASLIITGNGDVIEPEESLIAIGSGGPFAQAAARALMENTQLSAKEIVQKSLTIAGDICIYTNNNLTIEELNDEGK.

Thr-7 is an active-site residue. Residues Gly-162, Cys-165, and Thr-168 each contribute to the Na(+) site.

It belongs to the peptidase T1B family. HslV subfamily. A double ring-shaped homohexamer of HslV is capped on each side by a ring-shaped HslU homohexamer. The assembly of the HslU/HslV complex is dependent on binding of ATP.

The protein localises to the cytoplasm. It catalyses the reaction ATP-dependent cleavage of peptide bonds with broad specificity.. Its activity is regulated as follows. Allosterically activated by HslU binding. Its function is as follows. Protease subunit of a proteasome-like degradation complex believed to be a general protein degrading machinery. The polypeptide is ATP-dependent protease subunit HslV (Legionella pneumophila (strain Lens)).